A 390-amino-acid chain; its full sequence is S-adenosylmethionine synthase 2 (390 aa).

A Mg(2+)-binding site is contributed by Glu-9. His-15 is an ATP binding site. Glu-43 contributes to the K(+) binding site. Positions 56 and 99 each coordinate L-methionine. Residues 167 to 169 (DGK), 235 to 238 (SGRF), Asp-246, 252 to 253 (RK), Ala-269, Lys-273, and Lys-277 each bind ATP. Residue Asp-246 participates in L-methionine binding. Lys-277 provides a ligand contact to L-methionine.

It belongs to the AdoMet synthase family. In terms of assembly, homotetramer. It depends on Mn(2+) as a cofactor. The cofactor is Mg(2+). Co(2+) is required as a cofactor. Requires K(+) as cofactor.

The protein localises to the cytoplasm. The enzyme catalyses L-methionine + ATP + H2O = S-adenosyl-L-methionine + phosphate + diphosphate. The protein operates within amino-acid biosynthesis; S-adenosyl-L-methionine biosynthesis; S-adenosyl-L-methionine from L-methionine: step 1/1. Its function is as follows. Catalyzes the formation of S-adenosylmethionine from methionine and ATP. The reaction comprises two steps that are both catalyzed by the same enzyme: formation of S-adenosylmethionine (AdoMet) and triphosphate, and subsequent hydrolysis of the triphosphate. This Solanum tuberosum (Potato) protein is S-adenosylmethionine synthase 2 (METK2).